Here is a 954-residue protein sequence, read N- to C-terminus: Valine--tRNA ligase (954 aa).

A 'HIGH' region motif is present at residues 48 to 58; sequence PNVTGSLHMGH. The 'KMSKS' region signature appears at 560-564; it reads KMSKS. Residue Lys-563 coordinates ATP. Residues 883 to 954 are a coiled coil; the sequence is AGFINKEAEL…QTQYQAIENL (72 aa).

Belongs to the class-I aminoacyl-tRNA synthetase family. ValS type 1 subfamily. In terms of assembly, monomer.

The protein localises to the cytoplasm. The enzyme catalyses tRNA(Val) + L-valine + ATP = L-valyl-tRNA(Val) + AMP + diphosphate. In terms of biological role, catalyzes the attachment of valine to tRNA(Val). As ValRS can inadvertently accommodate and process structurally similar amino acids such as threonine, to avoid such errors, it has a 'posttransfer' editing activity that hydrolyzes mischarged Thr-tRNA(Val) in a tRNA-dependent manner. This is Valine--tRNA ligase from Actinobacillus pleuropneumoniae serotype 5b (strain L20).